We begin with the raw amino-acid sequence, 346 residues long: DNA-directed RNA polymerase subunit alpha (346 aa).

Residues Met1 to Glu243 are alpha N-terminal domain (alpha-NTD). Residues Leu260–Ala346 are alpha C-terminal domain (alpha-CTD).

Belongs to the RNA polymerase alpha chain family. Homodimer. The RNAP catalytic core consists of 2 alpha, 1 beta, 1 beta' and 1 omega subunit. When a sigma factor is associated with the core the holoenzyme is formed, which can initiate transcription.

The enzyme catalyses RNA(n) + a ribonucleoside 5'-triphosphate = RNA(n+1) + diphosphate. In terms of biological role, DNA-dependent RNA polymerase catalyzes the transcription of DNA into RNA using the four ribonucleoside triphosphates as substrates. The polypeptide is DNA-directed RNA polymerase subunit alpha (Sorangium cellulosum (strain So ce56) (Polyangium cellulosum (strain So ce56))).